The chain runs to 1131 residues: PPi-type phosphoenolpyruvate carboxykinase (1131 aa).

It belongs to the PPi-type phosphoenolpyruvate carboxykinase family. Monomer and trimer; forms heterotrimers with PEPCK2 and PEPCK3.

The enzyme catalyses oxaloacetate + diphosphate = phosphoenolpyruvate + phosphate + CO2. In terms of biological role, inorganic pyrophosphate (PPi)-dependent phosphoenolpyruvate carboxykinase, which regulates the carbon flow of the central metabolism by fixing CO(2) to phosphoenolpyruvate to produce oxaloacetate. Can also produce pyruvate and diphosphate from phosphoenolpyruvate and phosphate. This Propionibacterium freudenreichii subsp. freudenreichii protein is PPi-type phosphoenolpyruvate carboxykinase.